The sequence spans 138 residues: MAPK kinase substrate protein At1g80180 (138 aa).

The interval 52-138 (TSEVQDQTTK…RKRPAKRRSR (87 aa)) is disordered. Basic and acidic residues predominate over residues 69–81 (KPIRTDGGMERSR). A Phosphoserine modification is found at Ser-98. Position 105 is a phosphoserine; by MAPK6 (Ser-105). Positions 121–138 (QPGKKVNQRKRPAKRRSR) are enriched in basic residues.

As to expression, expressed in developing cotyledons, mature cotyledons, cotyledon epidermis and stomata.

In terms of biological role, may play a role in the regulation of stomata patterning. In Arabidopsis thaliana (Mouse-ear cress), this protein is MAPK kinase substrate protein At1g80180.